A 215-amino-acid chain; its full sequence is Protein LURP-one-related 16 (215 aa).

Glycine 2 carries the N-myristoyl glycine lipid modification.

This sequence belongs to the LOR family.

Might be related to the phospholipid scramblase and tubby-like superfamily of membrane tethered transcription factors. The protein is Protein LURP-one-related 16 of Arabidopsis thaliana (Mouse-ear cress).